The chain runs to 399 residues: 1-deoxy-D-xylulose 5-phosphate reductoisomerase (399 aa).

7 residues coordinate NADPH: T11, G12, S13, I14, G37, N39, and N125. K126 is a binding site for 1-deoxy-D-xylulose 5-phosphate. Position 127 (E127) interacts with NADPH. A Mn(2+)-binding site is contributed by D151. 4 residues coordinate 1-deoxy-D-xylulose 5-phosphate: S152, E153, S177, and H200. E153 is a Mn(2+) binding site. G206 provides a ligand contact to NADPH. S213, N218, K219, and E222 together coordinate 1-deoxy-D-xylulose 5-phosphate. E222 contacts Mn(2+).

Belongs to the DXR family. Mg(2+) is required as a cofactor. The cofactor is Mn(2+).

It catalyses the reaction 2-C-methyl-D-erythritol 4-phosphate + NADP(+) = 1-deoxy-D-xylulose 5-phosphate + NADPH + H(+). Its pathway is isoprenoid biosynthesis; isopentenyl diphosphate biosynthesis via DXP pathway; isopentenyl diphosphate from 1-deoxy-D-xylulose 5-phosphate: step 1/6. Its function is as follows. Catalyzes the NADPH-dependent rearrangement and reduction of 1-deoxy-D-xylulose-5-phosphate (DXP) to 2-C-methyl-D-erythritol 4-phosphate (MEP). This Nostoc sp. (strain PCC 7120 / SAG 25.82 / UTEX 2576) protein is 1-deoxy-D-xylulose 5-phosphate reductoisomerase.